A 510-amino-acid chain; its full sequence is NAD(P)H-quinone oxidoreductase subunit 2 B, chloroplastic (510 aa).

13 consecutive transmembrane segments (helical) span residues 24–44 (LLLF…GLIL), 57–77 (IPWL…ALLF), 99–119 (IFQF…VEYI), 124–144 (MAIT…MFLC), 149–169 (LITI…LSGY), 183–203 (YLLM…WLYG), 227–247 (PGIS…LSPA), 295–315 (WHLL…LIAI), 323–343 (MLAY…IVGD), 354–374 (YMLF…SFGL), 392–412 (AFLA…PPLA), 418–438 (LHLF…IGLL), and 482–502 (LSMI…NPII).

It belongs to the complex I subunit 2 family. In terms of assembly, NDH is composed of at least 16 different subunits, 5 of which are encoded in the nucleus.

The protein localises to the plastid. The protein resides in the chloroplast thylakoid membrane. It carries out the reaction a plastoquinone + NADH + (n+1) H(+)(in) = a plastoquinol + NAD(+) + n H(+)(out). The catalysed reaction is a plastoquinone + NADPH + (n+1) H(+)(in) = a plastoquinol + NADP(+) + n H(+)(out). Its function is as follows. NDH shuttles electrons from NAD(P)H:plastoquinone, via FMN and iron-sulfur (Fe-S) centers, to quinones in the photosynthetic chain and possibly in a chloroplast respiratory chain. The immediate electron acceptor for the enzyme in this species is believed to be plastoquinone. Couples the redox reaction to proton translocation, and thus conserves the redox energy in a proton gradient. This is NAD(P)H-quinone oxidoreductase subunit 2 B, chloroplastic from Morus indica (Mulberry).